The primary structure comprises 1174 residues: Protein kinase C-like (1174 aa).

An REM-1 1 domain is found at 1–68 (MANVEETVAN…LRDLDLQRTT (68 aa)). Polar residues predominate over residues 69 to 84 (SGVDNMSLQPGRSPTN). Positions 69–140 (SGVDNMSLQP…PPPATANKRP (72 aa)) are disordered. Residues 96–123 (GYAQQDQGGYGGPQSQYSQLSGGEALQP) are compositionally biased toward low complexity. The segment covering 124-134 (PRAPFAAPPPA) has biased composition (pro residues). The 78-residue stretch at 149 to 226 (KYDTPHLGPR…LKRYEDLHVD (78 aa)) folds into the REM-1 2 domain. The region spanning 229–349 (GDGDDNDSLD…MRRKKLETEL (121 aa)) is the C2 domain. The disordered stretch occupies residues 358 to 406 (DKMGGHTGIQPDMQFQPPPGQSPAGGPGGGPTPAGVRPPGAPQPQTGPI). Residues 380–389 (PAGGPGGGPT) are compositionally biased toward gly residues. 2 Phorbol-ester/DAG-type zinc fingers span residues 458 to 506 (GHKF…VTKC) and 526 to 576 (PHRF…PDFC). Residues 593-842 (TRRGQSSSGP…PAANTQGTGK (250 aa)) form a disordered region. The segment covering 596-611 (GQSSSGPGMSQRTLRP) has biased composition (polar residues). Residues 624–636 (QSPGQPGQESPTQ) show a composition bias toward low complexity. Positions 648–657 (SPPPGPPRQP) are enriched in pro residues. Over residues 658–709 (SYPSSATSVDAARASYSTTGTASTGAPTSPTSGSRPPSGPRTQSSVAAAAAA) the composition is skewed to low complexity. Positions 720 to 744 (RSNTDYSPQSGRSSGSGYPTEQRMS) are enriched in polar residues. Residues 786–802 (LPQPPPPQSPPQHPQQP) are compositionally biased toward pro residues. The span at 808 to 820 (KMPEQQALTQQPP) shows a compositional bias: polar residues. The Protein kinase domain occupies 849-1108 (FNFLAVLGKG…AQEIMSHAFF (260 aa)). ATP contacts are provided by residues 855-863 (LGKGNFGKV) and Lys878. Asp974 serves as the catalytic Proton acceptor. Positions 1109-1174 (RNINWDDIYH…RGFSYSADFA (66 aa)) constitute an AGC-kinase C-terminal domain.

Belongs to the protein kinase superfamily. AGC Ser/Thr protein kinase family. PKC subfamily.

The enzyme catalyses L-seryl-[protein] + ATP = O-phospho-L-seryl-[protein] + ADP + H(+). The catalysed reaction is L-threonyl-[protein] + ATP = O-phospho-L-threonyl-[protein] + ADP + H(+). The chain is Protein kinase C-like (PKC1) from Cochliobolus heterostrophus (Southern corn leaf blight fungus).